Here is a 103-residue protein sequence, read N- to C-terminus: Small ribosomal subunit protein uS10 (103 aa).

The protein belongs to the universal ribosomal protein uS10 family. As to quaternary structure, part of the 30S ribosomal subunit.

Its function is as follows. Involved in the binding of tRNA to the ribosomes. The polypeptide is Small ribosomal subunit protein uS10 (Mycoplasmopsis pulmonis (strain UAB CTIP) (Mycoplasma pulmonis)).